Reading from the N-terminus, the 415-residue chain is ATP-dependent RNA helicase RhlB (415 aa).

A Q motif motif is present at residues 9–37 (QRFSALPLHPIVRGALAKKGFDFCTPIQA). Positions 40 to 218 (LPISLNGRDV…FEDMNEPEYI (179 aa)) constitute a Helicase ATP-binding domain. 53-60 (AQTGTGKT) lines the ATP pocket. The short motif at 164-167 (DEAD) is the DEAD box element. The region spanning 241–389 (DKMALLLTLM…VSQYETEALL (149 aa)) is the Helicase C-terminal domain.

The protein belongs to the DEAD box helicase family. RhlB subfamily. As to quaternary structure, component of the RNA degradosome, which is a multiprotein complex involved in RNA processing and mRNA degradation.

The protein localises to the cytoplasm. It catalyses the reaction ATP + H2O = ADP + phosphate + H(+). Functionally, DEAD-box RNA helicase involved in RNA degradation. Has RNA-dependent ATPase activity and unwinds double-stranded RNA. The chain is ATP-dependent RNA helicase RhlB from Haemophilus influenzae (strain ATCC 51907 / DSM 11121 / KW20 / Rd).